A 569-amino-acid polypeptide reads, in one-letter code: BTB/POZ domain-containing protein At3g50840 (569 aa).

Residues 18-87 enclose the BTB domain; it reads SDIEIEVDDI…SYGFKVDISV (70 aa). Residues 194–459 form the NPH3 domain; the sequence is ELWFEDLTEL…VQVLFLEQLQ (266 aa). Residues 240–259 show a composition bias toward low complexity; the sequence is ISRSSSASSSSSSSSTTIAS. The segment at 240-261 is disordered; the sequence is ISRSSSASSSSSSSSTTIASEN. Position 400 is a phosphotyrosine (Y400).

Belongs to the NPH3 family.

It functions in the pathway protein modification; protein ubiquitination. May act as a substrate-specific adapter of an E3 ubiquitin-protein ligase complex (CUL3-RBX1-BTB) which mediates the ubiquitination and subsequent proteasomal degradation of target proteins. This is BTB/POZ domain-containing protein At3g50840 from Arabidopsis thaliana (Mouse-ear cress).